We begin with the raw amino-acid sequence, 117 residues long: Large ribosomal subunit protein bL20 (117 aa).

This sequence belongs to the bacterial ribosomal protein bL20 family.

Functionally, binds directly to 23S ribosomal RNA and is necessary for the in vitro assembly process of the 50S ribosomal subunit. It is not involved in the protein synthesizing functions of that subunit. This Mesomycoplasma hyopneumoniae (strain 7448) (Mycoplasma hyopneumoniae) protein is Large ribosomal subunit protein bL20.